The chain runs to 281 residues: Diaminopimelate epimerase (281 aa).

Substrate is bound by residues N13, Q46, and N66. The active-site Proton donor is the C75. Residues 76–77, N160, N193, and 211–212 contribute to the substrate site; these read GN and ER. Residue C220 is the Proton acceptor of the active site. 221–222 contributes to the substrate binding site; the sequence is GT.

Belongs to the diaminopimelate epimerase family. In terms of assembly, homodimer.

It is found in the cytoplasm. The enzyme catalyses (2S,6S)-2,6-diaminopimelate = meso-2,6-diaminopimelate. Its pathway is amino-acid biosynthesis; L-lysine biosynthesis via DAP pathway; DL-2,6-diaminopimelate from LL-2,6-diaminopimelate: step 1/1. In terms of biological role, catalyzes the stereoinversion of LL-2,6-diaminopimelate (L,L-DAP) to meso-diaminopimelate (meso-DAP), a precursor of L-lysine and an essential component of the bacterial peptidoglycan. This Acinetobacter baumannii (strain AB307-0294) protein is Diaminopimelate epimerase.